Here is a 559-residue protein sequence, read N- to C-terminus: O-fucosyltransferase 37 (559 aa).

A helical; Signal-anchor for type II membrane protein membrane pass occupies residues 53–73; the sequence is FFLLLISLSLVFSGISFLTFS. N-linked (GlcNAc...) asparagine glycosylation occurs at N126. Residue 331-333 participates in substrate binding; that stretch reads HLR. N-linked (GlcNAc...) asparagine glycosylation is found at N372, N403, N447, and N504.

Belongs to the glycosyltransferase GT106 family.

The protein localises to the membrane. The protein operates within glycan metabolism. The protein is O-fucosyltransferase 37 of Arabidopsis thaliana (Mouse-ear cress).